The sequence spans 244 residues: MDLGLAGRRALVTGAGKGIGRSTVLALKAAGAQVVAVSRTREDLDDLVRECPGVEPVCVDLADWEATEQALSNVGPADLLVNNAAVALLQPFLEVTKEACVTSFNVNLRAVIQVSQIVAKGMIARGVPGAIVNVSSQASQRALTNHTVYCSTKGALYMLTKMMALELGPHKIRVNAVNPTVVMTPMGRTNWSDPHKAKAMLDRIPLGKFAEVENVVDTILFLLSNRSGMTTGSTLPVDGGFLAT.

The residue at position 1 (Met-1) is an N-acetylmethionine. 11–39 is a binding site for NADP(+); it reads LVTGAGKGIGRSTVLALKAAGAQVVAVSR. Omega-N-methylarginine is present on Arg-21. Ser-136 lines the substrate pocket. Tyr-149 serves as the catalytic Proton acceptor. Lys-153 is a catalytic residue.

It belongs to the short-chain dehydrogenases/reductases (SDR) family. As to quaternary structure, homotetramer. Highly expressed in kidney and liver. Expressed in epididymis. Expressed at intermediate level in lung. Weakly expressed in brain, heart, spleen and testis.

It localises to the membrane. It carries out the reaction xylitol + NADP(+) = L-xylulose + NADPH + H(+). Functionally, catalyzes the NADPH-dependent reduction of several pentoses, tetroses, trioses, alpha-dicarbonyl compounds and L-xylulose. Participates in the uronate cycle of glucose metabolism. May play a role in the water absorption and cellular osmoregulation in the proximal renal tubules by producing xylitol, an osmolyte, thereby preventing osmolytic stress from occurring in the renal tubules. The sequence is that of L-xylulose reductase (DCXR) from Cavia porcellus (Guinea pig).